Consider the following 460-residue polypeptide: Bifunctional beta-D-glucosidase/beta-D-fucosidase (460 aa).

The active-site Proton donor is the glutamate 168. Glutamate 362 serves as the catalytic Nucleophile.

The protein belongs to the glycosyl hydrolase 1 family. As to quaternary structure, monomer.

It is found in the secreted. The enzyme catalyses Hydrolysis of terminal, non-reducing beta-D-glucosyl residues with release of beta-D-glucose.. It carries out the reaction Hydrolysis of terminal non-reducing beta-D-fucose residues in beta-D-fucosides.. With respect to regulation, inhibited by Cu(2+), Ag(+) and Hg(+), but not by other cations such as Mg(2+), Ca(2+), Mn(2+) and Co(2+). Inhibited by 1-amino-1-deoxy-D-glucose and p-chloromercuribenzoic acid, but not by EDTA or dithiothreitol. Inhibited by the disaccharides sucrose, lactose and cellobiose. The monosaccharides D-fructose, D-mannose, D-xylose and D-glucose increase the beta-D-fucosidase activity, but not the beta-D-glucosidase activity. D-glucose inhibits the beta-D-glucosidase activity, but promotes the beta-D-fucosidase activity. D-fucose inhibits the beta-D-glucosidase activity and does not significantly affect the beta-D-fucosidase activity. Bifunctional beta-D-glucosidase/beta-D-fucosidase. Activity towards pNP-beta-D-fucoside is about 80-85% of the activity towards pNP-beta-D-glucoside. Also has slight activity (less than 10%) towards pNP-beta-D-galactoside, and very low activity (less than 1%) towards pNP-beta-D-xyloside. Hydrolyzes laminaribiose, sophorose, cellobiose and gentobiose. Not active against maltose, pNP-alpha-D-glucoside or pNP-beta-L-fucoside. The polypeptide is Bifunctional beta-D-glucosidase/beta-D-fucosidase (Bifidobacterium breve).